We begin with the raw amino-acid sequence, 77 residues long: Small ribosomal subunit protein uS17 (77 aa).

Belongs to the universal ribosomal protein uS17 family. As to quaternary structure, part of the 30S ribosomal subunit.

Functionally, one of the primary rRNA binding proteins, it binds specifically to the 5'-end of 16S ribosomal RNA. This Rickettsia canadensis (strain McKiel) protein is Small ribosomal subunit protein uS17.